Here is a 294-residue protein sequence, read N- to C-terminus: Basic endochitinase (294 aa).

A signal peptide spans 1-24; sequence MNIKVSLLFILPIFLLLLTSKVKA. Residues 25–294 form the GH18 domain; it reads GDIVVYWGQD…GYSSAIRGAV (270 aa). Cystine bridges form between cysteine 44–cysteine 91 and cysteine 74–cysteine 81. The active-site Proton donor is glutamate 151. Cysteine 182 and cysteine 211 are joined by a disulfide.

This sequence belongs to the glycosyl hydrolase 18 family. Chitinase class II subfamily.

The enzyme catalyses Random endo-hydrolysis of N-acetyl-beta-D-glucosaminide (1-&gt;4)-beta-linkages in chitin and chitodextrins.. In terms of biological role, this protein functions as a defense against chitin containing fungal pathogens. The polypeptide is Basic endochitinase (Nicotiana tabacum (Common tobacco)).